We begin with the raw amino-acid sequence, 180 residues long: Adenine phosphoribosyltransferase (180 aa).

At S2 the chain carries N-acetylserine. Phosphoserine occurs at positions 4, 15, and 30. Residue Y60 is modified to Phosphotyrosine. S66 is subject to Phosphoserine. K114 bears the N6-acetyllysine mark. Position 135 is a phosphothreonine (T135).

This sequence belongs to the purine/pyrimidine phosphoribosyltransferase family. Homodimer.

The protein localises to the cytoplasm. The enzyme catalyses AMP + diphosphate = 5-phospho-alpha-D-ribose 1-diphosphate + adenine. The protein operates within purine metabolism; AMP biosynthesis via salvage pathway; AMP from adenine: step 1/1. Functionally, catalyzes a salvage reaction resulting in the formation of AMP, that is energically less costly than de novo synthesis. The chain is Adenine phosphoribosyltransferase from Mus pahari (Gairdner's shrew-mouse).